Consider the following 140-residue polypeptide: uncharacterized protein (140 aa).

Transmembrane regions (helical) follow at residues leucine 33–phenylalanine 53 and serine 59–phenylalanine 79. Residues glutamate 89 to aspartate 104 show a composition bias toward basic and acidic residues. Residues glutamate 89–serine 140 form a disordered region. Positions phenylalanine 105–alanine 121 are enriched in polar residues.

Its subcellular location is the membrane. This is an uncharacterized protein from Schizosaccharomyces pombe (strain 972 / ATCC 24843) (Fission yeast).